The chain runs to 444 residues: MLVATQSLLLLSFICTLVTPPGLACGPGRGIGKRRHPKKLTPLAYKQFIPNVAEKTLGASGRYEGKITRNSDCFKELTPNYNPDIMFKDEESTGADRLMTQRCKDKLNALAISVMNQWPGVKLRVTEGWDEDGHHLEESLHYEGRAVDITTSDRDRSKYGMLGRLAVEAGFDWVYYESKAHIHCSVKAENSVAAKSGGCFPAGARVMVEFGGTKAVKDLRPGDRVLSSDPQGNLLYSDFLMFIDQERDVKKLFYVIETSQRKIRLTAAHLLFVAQTKVNGTRSFKSVFASNIQPGDLIYTADPKTMTLKAVKVEKVDLEEDTGAYAPLTAHGTVVIDQVLASCYAVIEEHTWAHLAFAPLRFGMSLSSYIYPRDSSPPSGLQPHHQVDLQSHHQVDLQSHHQVDLQSHHQLEGIHWYSQLLYQIGTWLLDSNSLHPLGMATKSS.

The N-terminal stretch at 1–24 (MLVATQSLLLLSFICTLVTPPGLA) is a signal peptide. Residue Cys-25 is the site of N-palmitoyl cysteine attachment. Positions 33–39 (KRRHPKK) match the Cardin-Weintraub motif. Ca(2+)-binding residues include Glu-90, Glu-91, Asp-96, Thr-126, Glu-127, Asp-130, and Asp-132. The Zn(2+) site is built by His-141, Asp-148, and His-183. Residue Gly-198 is the site of Cholesterol glycine ester attachment. Repeat copies occupy residues 386–393 (QVDLQSHH), 394–401 (QVDLQSHH), and 403–409 (VDLQSHH). The 3 X 8 AA tandem repeats of Q-V-D-L-Q-S-H-H stretch occupies residues 386–409 (QVDLQSHHQVDLQSHHQVDLQSHH).

It belongs to the hedgehog family. Interacts with HHATL/GUP1 which negatively regulates HHAT-mediated palmitoylation of the SHH N-terminus. Interacts with BOC and CDON. Interacts with HHIP. Interacts with DISP1 via its cholesterol anchor. Interacts with SCUBE2. As to quaternary structure, multimer. Post-translationally, the C-terminal domain displays an autoproteolysis activity and a cholesterol transferase activity. Both activities result in the cleavage of the full-length protein and covalent attachment of a cholesterol moiety to the C-terminal of the newly generated N-terminal fragment (ShhN). Cholesterylation is required for the sonic hedgehog protein N-product targeting to lipid rafts and multimerization. ShhN is the active species in both local and long-range signaling, whereas the C-product (ShhC) is degraded in the reticulum endoplasmic. In terms of processing, N-palmitoylation by HHAT of ShhN is required for sonic hedgehog protein N-product multimerization and full activity. It is a prerequisite for the membrane-proximal positioning and the subsequent shedding of this N-terminal peptide. The lipidated N- and C-terminal peptides of ShhNp can be cleaved (shedding). The N-terminal palmitoylated peptide is cleaved at the Cardin-Weintraub (CW) motif site. The cleavage reduced the interactions with heparan sulfate. The cleavage is enhanced by SCUBE2. Strongly expressed in notochord and neural floor plate during embryogenesis. In tadpole, high expression is observed in pancreas/stomach, moderate expression in tail, and low expression in intestine, brain, and hind limb.

The protein resides in the endoplasmic reticulum membrane. The protein localises to the golgi apparatus membrane. Its subcellular location is the cell membrane. It carries out the reaction glycyl-L-cysteinyl-[protein] + cholesterol + H(+) = [protein]-C-terminal glycyl cholesterol ester + N-terminal L-cysteinyl-[protein]. Its function is as follows. The C-terminal part of the sonic hedgehog protein precursor displays an autoproteolysis and a cholesterol transferase activity. Both activities result in the cleavage of the full-length protein into two parts (ShhN and ShhC) followed by the covalent attachment of a cholesterol moiety to the C-terminal of the newly generated ShhN. Both activities occur in the endoplasmic reticulum. Once cleaved, ShhC is degraded in the endoplasmic reticulum. Functionally, the dually lipidated sonic hedgehog protein N-product (ShhNp) is a morphogen which is essential for a variety of patterning events during development. Induces ventral cell fate in the neural tube and somites. Involved in the patterning of the anterior-posterior axis of the developing limb bud. Essential for axon guidance. Binds to the patched (PTCH1) receptor, which functions in association with smoothened (SMO), to activate the transcription of target genes. In the absence of SHH, PTCH1 represses the constitutive signaling activity of SMO. The sequence is that of Sonic hedgehog protein from Xenopus laevis (African clawed frog).